A 285-amino-acid chain; its full sequence is Protoheme IX farnesyltransferase (285 aa).

The next 9 membrane-spanning stretches (helical) occupy residues 13–33 (LGKLGVVSLLDLAAVAGAFLA), 40–60 (LLPIIPMFIGGTLASMGAMII), 89–109 (EAIIVGSLLAILGTALGFIDN), 110–130 (ILTAFFIALGVVIYIFVYTIL), 137–157 (LNIVIGGFAGSAAAWAGYTSL), 165–185 (GFLLGFLIFMWTPGHFWSLAL), 194–214 (AHYPMLPAVVGITTSARAIAI), 230–252 (INLIALIAFSILSLFLMFLSYRL), and 265–285 (FIFSNIYLMLILLIMIIVKLI).

It belongs to the UbiA prenyltransferase family. Protoheme IX farnesyltransferase subfamily.

Its subcellular location is the cell membrane. It carries out the reaction heme b + (2E,6E)-farnesyl diphosphate + H2O = Fe(II)-heme o + diphosphate. The protein operates within porphyrin-containing compound metabolism; heme O biosynthesis; heme O from protoheme: step 1/1. Its function is as follows. Converts heme B (protoheme IX) to heme O by substitution of the vinyl group on carbon 2 of heme B porphyrin ring with a hydroxyethyl farnesyl side group. The sequence is that of Protoheme IX farnesyltransferase from Saccharolobus islandicus (strain Y.N.15.51 / Yellowstone #2) (Sulfolobus islandicus).